We begin with the raw amino-acid sequence, 921 residues long: Eukaryotic translation initiation factor 3 subunit A (921 aa).

A PCI domain is found at 319 to 493 (FKFYASQLVL…GVVSFMEDPF (175 aa)). Residues 497–524 (GGSTATNADDEQRNDDGYEETHVEEEPE) are disordered. The span at 506–517 (DEQRNDDGYEET) shows a compositional bias: basic and acidic residues. Coiled coils occupy residues 562–647 (ARNE…NEKT) and 693–868 (ERMS…IKRN). The segment covering 818 to 865 (AAKEHDDRQRMLQDRLTKERKERERVNKEKDEAARKQREIEEAVERTI) has biased composition (basic and acidic residues). Residues 818-921 (AAKEHDDRQR…KMKLRRAGRA (104 aa)) are disordered. Pro residues predominate over residues 873-890 (PAPPVRSAPPARAAPPPR). The segment covering 903 to 913 (PEKKLTYAEKM) has biased composition (basic and acidic residues).

The protein belongs to the eIF-3 subunit A family. In terms of assembly, component of the eukaryotic translation initiation factor 3 (eIF-3) complex.

Its subcellular location is the cytoplasm. RNA-binding component of the eukaryotic translation initiation factor 3 (eIF-3) complex, which is involved in protein synthesis of a specialized repertoire of mRNAs and, together with other initiation factors, stimulates binding of mRNA and methionyl-tRNAi to the 40S ribosome. The eIF-3 complex specifically targets and initiates translation of a subset of mRNAs involved in cell proliferation. In Eremothecium gossypii (strain ATCC 10895 / CBS 109.51 / FGSC 9923 / NRRL Y-1056) (Yeast), this protein is Eukaryotic translation initiation factor 3 subunit A.